The following is a 382-amino-acid chain: Alanine racemase (382 aa).

K39 serves as the catalytic Proton acceptor; specific for D-alanine. K39 bears the N6-(pyridoxal phosphate)lysine mark. R138 is a binding site for substrate. The Proton acceptor; specific for L-alanine role is filled by Y265. M312 contacts substrate.

Belongs to the alanine racemase family. Requires pyridoxal 5'-phosphate as cofactor.

It carries out the reaction L-alanine = D-alanine. It participates in amino-acid biosynthesis; D-alanine biosynthesis; D-alanine from L-alanine: step 1/1. Its function is as follows. Catalyzes the interconversion of L-alanine and D-alanine. May also act on other amino acids. This is Alanine racemase (alr) from Staphylococcus epidermidis (strain ATCC 35984 / DSM 28319 / BCRC 17069 / CCUG 31568 / BM 3577 / RP62A).